The following is a 123-amino-acid chain: Large ribosomal subunit protein uL29x (123 aa).

It belongs to the universal ribosomal protein uL29 family.

This Arabidopsis thaliana (Mouse-ear cress) protein is Large ribosomal subunit protein uL29x (RPL35C).